A 504-amino-acid polypeptide reads, in one-letter code: Alpha-L-arabinofuranosidase C (504 aa).

N-linked (GlcNAc...) asparagine glycosylation is found at asparagine 81, asparagine 152, asparagine 269, and asparagine 329.

The protein belongs to the glycosyl hydrolase 51 family.

Its subcellular location is the secreted. It carries out the reaction Hydrolysis of terminal non-reducing alpha-L-arabinofuranoside residues in alpha-L-arabinosides.. It functions in the pathway glycan metabolism; L-arabinan degradation. Functionally, alpha-L-arabinofuranosidase involved in the degradation of arabinoxylan, a major component of plant hemicellulose. Acts only on small linear 1,5-alpha-linked L-arabinofuranosyl oligosaccharides. The chain is Alpha-L-arabinofuranosidase C (abfC) from Emericella nidulans (strain FGSC A4 / ATCC 38163 / CBS 112.46 / NRRL 194 / M139) (Aspergillus nidulans).